The primary structure comprises 914 residues: Chitin synthase B (914 aa).

2 disordered regions span residues 1–67 and 112–140; these read MAYQ…TSGY and YARS…GGGL. Residues 130–140 are compositionally biased toward gly residues; it reads GGAGSGGGGGL. 7 helical membrane passes run 543–562, 586–606, 627–647, 662–682, 712–732, 843–863, and 882–902; these read WLNG…GRMY, ILTW…MDLV, IVNT…FILA, SFVV…YLVV, AGII…ASFM, LVTF…SDGV, and ALLW…CWFL.

It belongs to the chitin synthase family. Class III subfamily.

It is found in the cell membrane. It carries out the reaction [(1-&gt;4)-N-acetyl-beta-D-glucosaminyl](n) + UDP-N-acetyl-alpha-D-glucosamine = [(1-&gt;4)-N-acetyl-beta-D-glucosaminyl](n+1) + UDP + H(+). In terms of biological role, polymerizes chitin, a structural polymer of the cell wall and septum, by transferring the sugar moiety of UDP-GlcNAc to the non-reducing end of the growing chitin polymer. Plays an important role in septal growth or maintenance. Mediates colony spore formation. The polypeptide is Chitin synthase B (Aspergillus niger (strain ATCC MYA-4892 / CBS 513.88 / FGSC A1513)).